The primary structure comprises 676 residues: Probable potassium transport system protein Kup (676 aa).

Helical transmembrane passes span 14–34, 56–76, 97–117, 142–162, 173–193, 219–239, 252–272, 296–316, 345–365, 376–396, 402–422, and 429–449; these read GLLI…LYVM, ISLI…IIAL, AAWL…DGTL, VSNQ…LFSI, AFGP…LINI, AGFA…ALYS, SWPF…VWIL, LASI…LITG, IYIP…VLFF, GLSI…WLVL, LANL…MGSS, and GGYV…VWYF.

Belongs to the HAK/KUP transporter (TC 2.A.72) family.

The protein localises to the cell membrane. The catalysed reaction is K(+)(in) + H(+)(in) = K(+)(out) + H(+)(out). In terms of biological role, transport of potassium into the cell. Likely operates as a K(+):H(+) symporter. The chain is Probable potassium transport system protein Kup from Lactobacillus delbrueckii subsp. bulgaricus (strain ATCC BAA-365 / Lb-18).